A 270-amino-acid polypeptide reads, in one-letter code: 4-hydroxy-tetrahydrodipicolinate reductase (270 aa).

NAD(+) contacts are provided by residues 9–14 (GAGGRM) and Glu35. Residue Arg36 coordinates NADP(+). NAD(+) is bound by residues 99–101 (GTT) and 123–126 (ASNY). Residue His156 is the Proton donor/acceptor of the active site. A (S)-2,3,4,5-tetrahydrodipicolinate-binding site is contributed by His157. Catalysis depends on Lys160, which acts as the Proton donor. 166–167 (GT) is a binding site for (S)-2,3,4,5-tetrahydrodipicolinate.

The protein belongs to the DapB family.

Its subcellular location is the cytoplasm. The enzyme catalyses (S)-2,3,4,5-tetrahydrodipicolinate + NAD(+) + H2O = (2S,4S)-4-hydroxy-2,3,4,5-tetrahydrodipicolinate + NADH + H(+). It catalyses the reaction (S)-2,3,4,5-tetrahydrodipicolinate + NADP(+) + H2O = (2S,4S)-4-hydroxy-2,3,4,5-tetrahydrodipicolinate + NADPH + H(+). Its pathway is amino-acid biosynthesis; L-lysine biosynthesis via DAP pathway; (S)-tetrahydrodipicolinate from L-aspartate: step 4/4. Functionally, catalyzes the conversion of 4-hydroxy-tetrahydrodipicolinate (HTPA) to tetrahydrodipicolinate. In Mannheimia succiniciproducens (strain KCTC 0769BP / MBEL55E), this protein is 4-hydroxy-tetrahydrodipicolinate reductase.